The primary structure comprises 266 residues: Adaptin ear-binding coat-associated protein 2 (266 aa).

Disordered stretches follow at residues 164-191 (SMKK…LPPP) and 244-266 (GDFT…WVQF). Serine 181 carries the post-translational modification Phosphoserine. The WXXF motif 1 signature appears at 243 to 246 (WGDF). Residues 247-258 (TKSTGSTSSQTQ) show a composition bias toward low complexity. Positions 263–266 (WVQF) match the WXXF motif 2 motif.

This sequence belongs to the NECAP family. In terms of assembly, interacts with AP1G1 and AP2A1 components of the adapter protein complexes AP-1 and AP-2. Interacts with the GAE domain proteins GGA1, GGA2 and GGA3.

Its subcellular location is the cytoplasmic vesicle. It localises to the clathrin-coated vesicle membrane. The protein resides in the cell membrane. Involved in endocytosis. The protein is Adaptin ear-binding coat-associated protein 2 (NECAP2) of Bos taurus (Bovine).